The sequence spans 117 residues: Large ribosomal subunit protein bL20 (117 aa).

This sequence belongs to the bacterial ribosomal protein bL20 family.

Functionally, binds directly to 23S ribosomal RNA and is necessary for the in vitro assembly process of the 50S ribosomal subunit. It is not involved in the protein synthesizing functions of that subunit. In Pelobacter propionicus (strain DSM 2379 / NBRC 103807 / OttBd1), this protein is Large ribosomal subunit protein bL20.